Consider the following 250-residue polypeptide: Probable transcriptional regulatory protein SCO1521 (250 aa).

It belongs to the TACO1 family.

It is found in the cytoplasm. In Streptomyces coelicolor (strain ATCC BAA-471 / A3(2) / M145), this protein is Probable transcriptional regulatory protein SCO1521.